A 146-amino-acid chain; its full sequence is Large ribosomal subunit protein uL13 (146 aa).

This sequence belongs to the universal ribosomal protein uL13 family. As to quaternary structure, part of the 50S ribosomal subunit.

This protein is one of the early assembly proteins of the 50S ribosomal subunit, although it is not seen to bind rRNA by itself. It is important during the early stages of 50S assembly. The protein is Large ribosomal subunit protein uL13 of Sulfurisphaera tokodaii (strain DSM 16993 / JCM 10545 / NBRC 100140 / 7) (Sulfolobus tokodaii).